We begin with the raw amino-acid sequence, 81 residues long: Acyl carrier protein 2 (81 aa).

The region spanning 1 to 79 (MTETEILERI…DVIGAVQSLL (79 aa)) is the Carrier domain. Ser-39 carries the post-translational modification O-(pantetheine 4'-phosphoryl)serine.

This sequence belongs to the acyl carrier protein (ACP) family. Post-translationally, 4'-phosphopantetheine is transferred from CoA to a specific serine of apo-ACP by AcpS. This modification is essential for activity because fatty acids are bound in thioester linkage to the sulfhydryl of the prosthetic group.

The protein localises to the cytoplasm. It participates in lipid metabolism; fatty acid biosynthesis. Carrier of the growing fatty acid chain in fatty acid biosynthesis. In Ralstonia nicotianae (strain ATCC BAA-1114 / GMI1000) (Ralstonia solanacearum), this protein is Acyl carrier protein 2.